Here is a 90-residue protein sequence, read N- to C-terminus: UDP-N-acetylglucosamine 1-carboxyvinyltransferase (90 aa).

The protein belongs to the EPSP synthase family. MurA subfamily.

The protein resides in the cytoplasm. It carries out the reaction phosphoenolpyruvate + UDP-N-acetyl-alpha-D-glucosamine = UDP-N-acetyl-3-O-(1-carboxyvinyl)-alpha-D-glucosamine + phosphate. It participates in cell wall biogenesis; peptidoglycan biosynthesis. In terms of biological role, cell wall formation. Adds enolpyruvyl to UDP-N-acetylglucosamine. The polypeptide is UDP-N-acetylglucosamine 1-carboxyvinyltransferase (murA) (Mycobacteroides chelonae (Mycobacterium chelonae)).